The chain runs to 982 residues: Hunchback-like protein (982 aa).

A disordered region spans residues 87 to 194 (QPGEKIHPDG…SNYQVTSEPV (108 aa)). Residues 101 to 110 (PKEDGRKSSE) show a composition bias toward basic and acidic residues. The span at 111 to 132 (HTNSYDVSASQSPSNDGAQSDS) shows a compositional bias: polar residues. A compositionally biased stretch (acidic residues) spans 142–152 (CMTETEMDTDE). The segment covering 153 to 175 (KDSTIKPEDQATPKLEEGSDSKP) has biased composition (basic and acidic residues). Polar residues predominate over residues 176–193 (ESTSVEGTSSNYQVTSEP). C2H2-type zinc fingers lie at residues 336-358 (LVCPICGFMCPSKFHFNSHMNTH), 361-384 (HQCSMCDYTSRTEGRLKKHMRESH), 538-560 (FKCKQCGHQSLSKDDQWAHARTH), 567-589 (LNCQHCNFVTEYKHHLEYHYRNH), 595-617 (FQCKKCAYNCVNKSMLNSHMKSH), 623-647 (FRCMDCTYATKYCHSLKLHLKKYNH), and 734-756 (LKCSACDFVASSADEKMRHSMSH). Positions 377–415 (KKHMRESHTVEEQLRAGFESEPAKESASSPKNLSLSKDG) are disordered. The interval 811 to 896 (EEMDQGSDSA…PPLHSSSIVA (86 aa)) is disordered. Polar residues-rich tracts occupy residues 816–831 (GSDSAVSPTGSSQISS) and 843–862 (SLEQISARANGNNSPMSNDS). Over residues 863–875 (AMEKDGESADDAP) the composition is skewed to basic and acidic residues. 2 C2H2-type zinc fingers span residues 929 to 951 (FYCDHCKIPFDTQQVLDSHMRFH) and 957 to 981 (FMCSDCQYQAFNELSFALHMYQARH).

The protein belongs to the hunchback C2H2-type zinc-finger protein family. In terms of tissue distribution, expressed primarily in ectodermal cells during embryonic and larval development.

The protein resides in the nucleus. Required for the late stages of development. Plays a role in the developmental timing of postembryonic hypodermal seam cell fusion events and adult alae production. The protein is Hunchback-like protein of Caenorhabditis elegans.